Consider the following 314-residue polypeptide: Methionyl-tRNA formyltransferase (314 aa).

113-116 (SLLP) is a (6S)-5,6,7,8-tetrahydrofolate binding site.

This sequence belongs to the Fmt family.

The enzyme catalyses L-methionyl-tRNA(fMet) + (6R)-10-formyltetrahydrofolate = N-formyl-L-methionyl-tRNA(fMet) + (6S)-5,6,7,8-tetrahydrofolate + H(+). Functionally, attaches a formyl group to the free amino group of methionyl-tRNA(fMet). The formyl group appears to play a dual role in the initiator identity of N-formylmethionyl-tRNA by promoting its recognition by IF2 and preventing the misappropriation of this tRNA by the elongation apparatus. This is Methionyl-tRNA formyltransferase from Pseudomonas aeruginosa (strain UCBPP-PA14).